The following is a 992-amino-acid chain: Probable RNA-dependent RNA polymerase 3 (992 aa).

Positions 88 to 113 (PRLSPGESPVQSPRTPAKKSCRASQD) are disordered.

This sequence belongs to the RdRP family.

The catalysed reaction is RNA(n) + a ribonucleoside 5'-triphosphate = RNA(n+1) + diphosphate. In terms of biological role, probably involved in the RNA silencing pathway and required for the generation of small interfering RNAs (siRNAs). The protein is Probable RNA-dependent RNA polymerase 3 (RDR3) of Arabidopsis thaliana (Mouse-ear cress).